Consider the following 334-residue polypeptide: Antho-RFamide neuropeptides (334 aa).

The N-terminal stretch at 1–26 is a signal peptide; sequence MLVAMTTASYVTILVTLLFHILTINA. Positions 27 to 116 are excised as a propeptide; it reads KTVTKRAKET…REFQGRFGRE (90 aa). Composition is skewed to basic and acidic residues over residues 115-289 and 303-334; these read REQG…RELL and PQTRFRDVQMTRRNVAKKDKIEESNDEEANKS. Residues 115–334 form a disordered region; sequence REQGRFGREE…ESNDEEANKS (220 aa). F120 is subject to Phenylalanine amide. Positions 122–125 are excised as a propeptide; the sequence is REED. F129 is subject to Phenylalanine amide. Positions 131-134 are excised as a propeptide; it reads REED. F138 is modified (phenylalanine amide). Residues 140–142 constitute a propeptide that is removed on maturation; the sequence is REE. At F146 the chain carries Phenylalanine amide. Positions 148–151 are excised as a propeptide; the sequence is REED. F155 carries the post-translational modification Phenylalanine amide. Positions 157-160 are excised as a propeptide; the sequence is REED. F164 carries the post-translational modification Phenylalanine amide. Residues 166–169 constitute a propeptide that is removed on maturation; it reads REED. The residue at position 173 (F173) is a Phenylalanine amide. Residues 175-178 constitute a propeptide that is removed on maturation; it reads REEE. A Phenylalanine amide modification is found at F182. The propeptide occupies 184-187; that stretch reads REED. The residue at position 191 (F191) is a Phenylalanine amide. Positions 193-196 are excised as a propeptide; sequence REEE. Position 200 is a phenylalanine amide (F200). Residues 202 to 205 constitute a propeptide that is removed on maturation; it reads REED. The residue at position 209 (F209) is a Phenylalanine amide. Positions 211–214 are excised as a propeptide; it reads REED. Phenylalanine amide is present on F218. A propeptide spanning residues 220–223 is cleaved from the precursor; the sequence is REEE. The residue at position 227 (F227) is a Phenylalanine amide. Residues 229–233 constitute a propeptide that is removed on maturation; sequence KRDED. F237 is modified (phenylalanine amide). Residues 239–242 constitute a propeptide that is removed on maturation; the sequence is KRED. F246 carries the phenylalanine amide modification. The propeptide occupies 248-252; that stretch reads KRDED. F256 is subject to Phenylalanine amide. Positions 258–262 are excised as a propeptide; sequence KRDED. F266 carries the post-translational modification Phenylalanine amide. A propeptide spanning residues 268–271 is cleaved from the precursor; the sequence is KRED. F275 is subject to Phenylalanine amide. A propeptide spanning residues 277–280 is cleaved from the precursor; that stretch reads KRED. At F284 the chain carries Phenylalanine amide. A propeptide spanning residues 286-334 is cleaved from the precursor; sequence RELLAKLNKRTTSIQEDPQTRFRDVQMTRRNVAKKDKIEESNDEEANKS.

Belongs to the FARP (FMRFamide related peptide) family. Neurons associated with smooth muscle fibers.

It is found in the secreted. In terms of biological role, not known but it could act as a transmitter at neuromuscular synapses. This chain is Antho-RFamide neuropeptides, found in Calliactis parasitica (Sea anemone).